A 133-amino-acid chain; its full sequence is Nucleoside diphosphate kinase (133 aa).

Positions 9, 57, 85, 91, 102, and 112 each coordinate ATP. The Pros-phosphohistidine intermediate role is filled by H115.

This sequence belongs to the NDK family. In terms of assembly, homotetramer. The cofactor is Mg(2+).

It localises to the cytoplasm. The catalysed reaction is a 2'-deoxyribonucleoside 5'-diphosphate + ATP = a 2'-deoxyribonucleoside 5'-triphosphate + ADP. It carries out the reaction a ribonucleoside 5'-diphosphate + ATP = a ribonucleoside 5'-triphosphate + ADP. Functionally, major role in the synthesis of nucleoside triphosphates other than ATP. The ATP gamma phosphate is transferred to the NDP beta phosphate via a ping-pong mechanism, using a phosphorylated active-site intermediate. This chain is Nucleoside diphosphate kinase, found in Rubrobacter xylanophilus (strain DSM 9941 / JCM 11954 / NBRC 16129 / PRD-1).